The primary structure comprises 371 residues: MNDKTIPVTQPSLPELAEFMPYLEKIWKNKWLTNNGPFHQELEEKLCEFLGVQHISLFNNATIALITALQALRITGEVITTPYSFVATSHAILWNGLTPVFVDIENDGYNIDYRKIEQAITPKTSAILPVHCYSTPCEVEEIQKIADNYGLKVIYDAAHAFGVNFKGGKVYLTMVIYQFLVSMRRKSSINFEGGAIISPDAKTKLRIDRLKNFGIADELTVTAPGINGKMSEINAAFGLVQLKHIEGSISKRKIIDSLYRNLLKGTPGITIFPGNINTNSNYSYFPILIDDGFHMSRDQAYELLKKNNILSRKYFYPLISNMPMYRGLISASVDNLPIANSVADKVLCLPIYTDLNEEIVVKITKLLLGKM.

Lysine 186 carries the post-translational modification N6-(pyridoxal phosphate)lysine.

This sequence belongs to the DegT/DnrJ/EryC1 family. The cofactor is pyridoxal 5'-phosphate.

It carries out the reaction dTDP-4-amino-4,6-dideoxy-D-glucose + 2-oxoglutarate = dTDP-4-dehydro-6-deoxy-alpha-D-glucose + L-glutamate. Its pathway is bacterial outer membrane biogenesis; lipopolysaccharide biosynthesis. Its function is as follows. Catalyzes the conversion of dTDP-4-dehydro-6-deoxy-D-glucose (dTDP-D-Glc4O) to dTDP-4-amino-4,6-dideoxy-D-glucose (dTDP-D-Qui4N). The sequence is that of dTDP-4-amino-4,6-dideoxy-D-glucose transaminase (vioA) from Escherichia coli.